The primary structure comprises 79 residues: Sulfur carrier protein TusA (79 aa).

Residue C17 is the Cysteine persulfide intermediate of the active site.

This sequence belongs to the sulfur carrier protein TusA family.

The protein localises to the cytoplasm. Its function is as follows. Sulfur carrier protein which probably makes part of a sulfur-relay system. The chain is Sulfur carrier protein TusA from Haemophilus influenzae (strain PittEE).